The sequence spans 282 residues: MSGGWMAQVGAWRTGALGLALLLLLGLGLGLEAAASPLSTPTSAQAAGPSSGSCPPTKFQCRTSGLCVPLTWRCDRDLDCSDGSDEEECRIEPCTQKGQCPPPPGLPCPCTGVSDCSGGTDKKLRNCSRLACLAGELRCTLSDDCIPLTWRCDGHPDCPDSSDELGCGTNEILPEGDATTMGPPVTLESVTSLRNATTMGPPVTLESVPSVGNATSSSAGDQSGSPTAYGVIAAAAVLSASLVTATLLLLSWLRAQERLRPLGLLVAMKESLLLSEQKTSLP.

Positions 1 to 35 are cleaved as a signal peptide; sequence MSGGWMAQVGAWRTGALGLALLLLLGLGLGLEAAA. At 36-229 the chain is on the extracellular side; it reads SPLSTPTSAQ…GDQSGSPTAY (194 aa). The LDL-receptor class A 1 domain occupies 53 to 90; that stretch reads SCPPTKFQCRTSGLCVPLTWRCDRDLDCSDGSDEEECR. Disulfide bonds link cysteine 54–cysteine 67, cysteine 61–cysteine 80, and cysteine 74–cysteine 89. Tryptophan 72, aspartate 75, aspartate 77, aspartate 79, aspartate 85, and glutamate 86 together coordinate Ca(2+). The N-linked (GlcNAc...) asparagine glycan is linked to asparagine 126. Residues 131–168 enclose the LDL-receptor class A 2 domain; the sequence is ACLAGELRCTLSDDCIPLTWRCDGHPDCPDSSDELGCG. Disulfide bonds link cysteine 132/cysteine 145, cysteine 139/cysteine 158, and cysteine 152/cysteine 167. 6 residues coordinate Ca(2+): tryptophan 150, aspartate 153, histidine 155, aspartate 157, aspartate 163, and glutamate 164. Residues asparagine 195 and asparagine 213 are each glycosylated (N-linked (GlcNAc...) asparagine). The tract at residues 199 to 223 is disordered; sequence MGPPVTLESVPSVGNATSSSAGDQS. Residues 210 to 223 are compositionally biased toward polar residues; it reads SVGNATSSSAGDQS. Residues 230 to 250 traverse the membrane as a helical segment; the sequence is GVIAAAAVLSASLVTATLLLL. Residues 251–282 are Cytoplasmic-facing; it reads SWLRAQERLRPLGLLVAMKESLLLSEQKTSLP.

Interacts (via LDL-receptor class A domains) with TCN2. As to expression, detected in the germinal center (GC) of lymphoid follicles (at protein level). Expressed abundantly on follicular dendritic cells (FDCs).

It is found in the cell membrane. Functionally, receptor for transcobalamin saturated with cobalamin (TCbl). Plays an important role in cobalamin uptake. Plasma membrane protein that is expressed on follicular dendritic cells (FDC) and mediates interaction with germinal center B cells. Functions as costimulator to promote B cell responses to antigenic stimuli; promotes B cell differentiation and proliferation. Germinal center-B (GC-B) cells differentiate into memory B-cells and plasma cells (PC) through interaction with T-cells and follicular dendritic cells (FDC). CD320 augments the proliferation of PC precursors generated by IL-10. This is CD320 antigen (CD320) from Homo sapiens (Human).